A 169-amino-acid chain; its full sequence is Macro domain-containing protein SCO6450 (169 aa).

Positions 1-169 constitute a Macro domain; that stretch reads MTGITLVQGD…AYEAFAARLG (169 aa).

Belongs to the MacroD-type family.

The polypeptide is Macro domain-containing protein SCO6450 (Streptomyces coelicolor (strain ATCC BAA-471 / A3(2) / M145)).